A 419-amino-acid polypeptide reads, in one-letter code: L-rhamnose isomerase (419 aa).

Mn(2+)-binding residues include His-262, Asp-294, and Asp-296.

The protein belongs to the rhamnose isomerase family. As to quaternary structure, homotetramer. The cofactor is Mn(2+).

It is found in the cytoplasm. The enzyme catalyses L-rhamnopyranose = L-rhamnulose. The protein operates within carbohydrate degradation; L-rhamnose degradation; glycerone phosphate from L-rhamnose: step 1/3. Its function is as follows. Catalyzes the interconversion of L-rhamnose and L-rhamnulose. This chain is L-rhamnose isomerase, found in Salmonella choleraesuis (strain SC-B67).